Consider the following 90-residue polypeptide: Albumin (90 aa).

Ser-5 is subject to Phosphoserine. Ca(2+) contacts are provided by Glu-6 and Asp-13. The region spanning 25–90 (LLRHLVDEPQ…LVASTQAALA (66 aa)) is the Albumin domain. At Ser-61 the chain carries Phosphoserine. Phosphothreonine is present on residues Thr-62 and Thr-64. Lys-80 is subject to N6-methyllysine.

This sequence belongs to the ALB/AFP/VDB family. As to quaternary structure, interacts with FCGRT; this interaction regulates ALB homeostasis. Interacts with TASOR. In plasma, occurs in a covalently-linked complex with chromophore-bound alpha-1-microglobulin; this interaction does not prevent fatty acid binding to ALB. As to expression, plasma.

It is found in the secreted. Binds water, Ca(2+), Na(+), K(+), fatty acids, hormones, bilirubin and drugs. Its main function is the regulation of the colloidal osmotic pressure of blood. Major zinc transporter in plasma, typically binds about 80% of all plasma zinc. Major calcium and magnesium transporter in plasma, binds approximately 45% of circulating calcium and magnesium in plasma. Potentially has more than two calcium-binding sites and might additionally bind calcium in a non-specific manner. The shared binding site between zinc and calcium suggests a crosstalk between zinc and calcium transport in the blood. The rank order of affinity is zinc &gt; calcium &gt; magnesium. Binds to the bacterial siderophore enterobactin and inhibits enterobactin-mediated iron uptake of E.coli from ferric transferrin, and may thereby limit the utilization of iron and growth of enteric bacteria such as E.coli. Does not prevent iron uptake by the bacterial siderophore aerobactin. This chain is Albumin, found in Capra hircus (Goat).